A 130-amino-acid polypeptide reads, in one-letter code: Large ribosomal subunit protein bL19 (130 aa).

Belongs to the bacterial ribosomal protein bL19 family.

Functionally, this protein is located at the 30S-50S ribosomal subunit interface and may play a role in the structure and function of the aminoacyl-tRNA binding site. The sequence is that of Large ribosomal subunit protein bL19 from Psychrobacter arcticus (strain DSM 17307 / VKM B-2377 / 273-4).